Here is a 458-residue protein sequence, read N- to C-terminus: Serine protease HTRA2, mitochondrial (458 aa).

The transit peptide at 1–31 (MAALRAGRGAGWSLRGWRALWGGRWGKGPLL) directs the protein to the mitochondrion. Positions 32 to 133 (TPDLRALLTS…GGRGPPAVLA (102 aa)) are excised as a propeptide. A helical membrane pass occupies residues 105–125 (VWLAVALGAGGAVLLLFWGGG). The short motif at 134 to 137 (SVLG) is the IAP-binding motif element. The interval 166–342 (ILGRHPFSGR…IPSDRLREFL (177 aa)) is serine protease. Active-site charge relay system residues include His-198, Asp-228, and Ser-306. The 82-residue stretch at 364–445 (VMMLTLTPSI…QLAVRIRRGQ (82 aa)) folds into the PDZ domain.

The protein belongs to the peptidase S1C family. Homotrimer. Interacts with MXI2. Interacts with THAP5 under apoptotic conditions. The mature protein, but not the precursor, binds to BIRC2/c-IAP1, BIRC3/c-IAP2 and XIAP/BIRC4. Interacts with BIRC6/bruce. Interacts with AREL1 (via HECT domain); in the cytoplasm following induction of apoptosis. In terms of processing, ubiquitinated by BIRC6; this activity is inhibited by DIABLO/SMAC. Autoproteolytically activated.

The protein resides in the mitochondrion intermembrane space. It is found in the mitochondrion membrane. The catalysed reaction is Cleavage of non-polar aliphatic amino-acids at the P1 position, with a preference for Val, Ile and Met. At the P2 and P3 positions, Arg is selected most strongly with a secondary preference for other hydrophilic residues.. Its activity is regulated as follows. Inhibited by BIRC6. Functionally, serine protease that shows proteolytic activity against a non-specific substrate beta-casein. Promotes apoptosis by either relieving the inhibition of BIRC proteins on caspases, leading to an increase in caspase activity; or by a BIRC inhibition-independent, caspase-independent and serine protease activity-dependent mechanism. Cleaves BIRC6 and relieves its inhibition on CASP3, CASP7 and CASP9, but it is also prone to inhibition by BIRC6. Cleaves THAP5 and promotes its degradation during apoptosis. This Bos taurus (Bovine) protein is Serine protease HTRA2, mitochondrial (HTRA2).